The primary structure comprises 548 residues: CBS domain-containing protein CBSCBSPB4 (548 aa).

Over residues 1-18 the composition is skewed to polar residues; it reads MANQGGPSRKSLSFSGHS. Positions 1–58 are disordered; sequence MANQGGPSRKSLSFSGHSFQGRKKASENEGGGGGGSDLLPRRSLTSSRSSISLSGERS. The residue at position 18 (Ser-18) is a Phosphoserine. Positions 37 to 56 are enriched in low complexity; it reads DLLPRRSLTSSRSSISLSGE. CBS domains are found at residues 63 to 126, 133 to 190, 233 to 293, and 301 to 358; these read VKRL…NLEE, MTKN…ERSV, IIPE…LPQE, and MTPN…AGST. Residues 411-498 enclose the PB1 domain; sequence PNTFAFKLQD…KGLKLHLDYT (88 aa). A helical membrane pass occupies residues 521–543; it reads AAAYKTVAAGAALAAGLGVLVYL.

The protein resides in the membrane. This Arabidopsis thaliana (Mouse-ear cress) protein is CBS domain-containing protein CBSCBSPB4 (CBSCBSPB4).